A 319-amino-acid polypeptide reads, in one-letter code: HPr kinase/phosphorylase (319 aa).

Active-site residues include H141 and K162. Residue 156–163 (GNSGVGKS) participates in ATP binding. S163 is a binding site for Mg(2+). Residue D180 is the Proton acceptor; for phosphorylation activity. Proton donor; for dephosphorylation activity of the active site. Positions 204-213 (MEIRGIGIID) are important for the catalytic mechanism of both phosphorylation and dephosphorylation. E205 lines the Mg(2+) pocket. The active site involves R246. Residues 267–272 (PVKVGR) form an important for the catalytic mechanism of dephosphorylation region.

This sequence belongs to the HPrK/P family. In terms of assembly, homohexamer. Mg(2+) is required as a cofactor.

The catalysed reaction is [HPr protein]-L-serine + ATP = [HPr protein]-O-phospho-L-serine + ADP + H(+). It catalyses the reaction [HPr protein]-O-phospho-L-serine + phosphate + H(+) = [HPr protein]-L-serine + diphosphate. Its function is as follows. Catalyzes the ATP- as well as the pyrophosphate-dependent phosphorylation of a specific serine residue in HPr, a phosphocarrier protein of the phosphoenolpyruvate-dependent sugar phosphotransferase system (PTS). HprK/P also catalyzes the pyrophosphate-producing, inorganic phosphate-dependent dephosphorylation (phosphorolysis) of seryl-phosphorylated HPr (P-Ser-HPr). The two antagonistic activities of HprK/P are regulated by several intracellular metabolites, which change their concentration in response to the absence or presence of rapidly metabolisable carbon sources (glucose, fructose, etc.) in the growth medium. Therefore, by controlling the phosphorylation state of HPr, HPrK/P is a sensor enzyme that plays a major role in the regulation of carbon metabolism and sugar transport: it mediates carbon catabolite repression (CCR), and regulates PTS-catalyzed carbohydrate uptake and inducer exclusion. The chain is HPr kinase/phosphorylase from Lactobacillus johnsonii (strain CNCM I-12250 / La1 / NCC 533).